We begin with the raw amino-acid sequence, 175 residues long: Ribonuclease M5 (175 aa).

A Toprim domain is found at 3–83 (NEIIIVEGKS…DVDVFNAFVS (81 aa)). Glu-9, Asp-57, and Asp-59 together coordinate Mg(2+).

This sequence belongs to the ribonuclease M5 family. The cofactor is Mg(2+).

It is found in the cytoplasm. It carries out the reaction Endonucleolytic cleavage of RNA, removing 21 and 42 nucleotides, respectively, from the 5'- and 3'-termini of a 5S-rRNA precursor.. In terms of biological role, required for correct processing of both the 5' and 3' ends of 5S rRNA precursor. Cleaves both sides of a double-stranded region yielding mature 5S rRNA in one step. In Mesoplasma florum (strain ATCC 33453 / NBRC 100688 / NCTC 11704 / L1) (Acholeplasma florum), this protein is Ribonuclease M5.